Consider the following 1477-residue polypeptide: MKKDREAQLCLFSALLAFLPFASLLNGNSKYMVLVPSQLYTETPEKICLHLYHLNETVTVTASLISQRGTRKLFDELVVDKDLFHCVSFTIPRLPSSEEEESLDINIEGAKHKFSERRVVLVKNKESVVFVQTDKPMYKPGQSVKFRVVSMDKNLHPLNELFPLAYIEDPKMNRIMQWQDVKTENGLKQLSFSLSAEPIQGPYKIVILKQSGVKEEHSFTVMEFVLPRFGVDVKVPNAISVYDEIINVTACATYTYGKPVPGHVKISLCHGNPTFSSETKSGCKEEDSRLDNNGCSTQEVNITEFQLKENYLKMHQAFHVNATVTEEGTGSEFSGSGRIEVERTRNKFLFLKADSHFRHGIPFFVKVRLVDIKGDPIPNEQVLIKARDAGYTNATTTDQHGLAKFSIDTNGISDYSLNIKVYHKEESSCIHSSCTAERHAEAHHTAYAVYSLSKSYIYLDTEAGVLPCNQIHTVQAHFILKGQVLGVLQQIVFHYLVMAQGSILQTGNHTHQVEPGESQVQGNFALEIPVEFSMVPVAKMLIYTILPDGEVIADSVKFQVEKCLRNKVHLSFSPSQSLPASQTHMRVTASPQSLCGLRAVDQSVLLQKPEAELSPSLIYDLPGMQDSNFIASSNDPFEDEDYCLMYQPIAREKDVYRYVRETGLMAFTNLKIKLPTYCNTDYDMVPLAVPAVALDSSTDRGMYESLPVVAVKSPLPQEPPRKDPPPKDPVIETIRNYFPETWIWDLVTVNSSGVTELEMTVPDTITEWKAGALCLSNDTGLGLSSVASFQAFQPFFVELTMPYSVIRGEAFTLKATVLNYLPTSLPMAVLLEASPDFTAVPVENNQDSYCLGANGRHTSSWLVTPKSLGNVNFSVSAEARQSPGPCGSEVATVPETGRKDTVVKVLIVEPEGIKKEHTFSSLLCASDAELSETLSLLLPPTVVKDSARAHFSVMGDILSSAIKNTQNLIQMPYGCGEQNMVLFAPNIYVLKYLNETQQLTEKIKSKALGYLRAGYQRELNYKHKDGSYSAFGDHNGQGQGNTWLTAFVLKSFAQARAFIFIDESHITDAFTWLSKQQKDSGCFRSSGSLLNNAMKGGVDDEITLSAYITMALLESSLPDTDPVVSKALSCLESSWENIEQGGNGSFVYTKALMAYAFALAGNQEKRNEILKSLDKEAIKEDNSIHWERPQKPTKSEGYLYTPQASSAEVEMSAYVVLARLTAQPAPSPEDLALSMGTIKWLTKQQNSYGGFSSTQDTVVALDALSKYGAATFSKSQKTPSVTVQSSGSFSQKFQVDKSNRLLLQQVSLPYIPGNYTVSVSGEGCVYAQTTLRYNVPLEKQQPAFALKVQTVPLTCNNPKGQNSFQISLEISYMGSRPASNMVIADVKMLSGFIPLKPTVKKLERLGHVSRTEVTTNNVLLYLDQVTNQTLSFSFIIQQDIPVKNLQPAIVKVYDYYETDEVAFAEYSSPCSSDDQNV.

Residues 1–24 form the signal peptide; it reads MKKDREAQLCLFSALLAFLPFASL. Residues cysteine 48 and cysteine 86 are joined by a disulfide bond. 2 N-linked (GlcNAc...) asparagine glycosylation sites follow: asparagine 55 and asparagine 247. 2 disulfides stabilise this stretch: cysteine 251/cysteine 295 and cysteine 269/cysteine 283. Residues asparagine 301, asparagine 321, asparagine 393, and asparagine 508 are each glycosylated (N-linked (GlcNAc...) asparagine). Disulfide bonds link cysteine 468/cysteine 563, cysteine 595/cysteine 774, and cysteine 643/cysteine 678. The bait region (approximate) stretch occupies residues 601–750; that stretch reads DQSVLLQKPE…TWIWDLVTVN (150 aa). N-linked (GlcNAc...) asparagine glycans are attached at residues asparagine 750, asparagine 777, and asparagine 872. 4 disulfides stabilise this stretch: cysteine 850-cysteine 886, cysteine 924-cysteine 1324, cysteine 1082-cysteine 1130, and cysteine 1355-cysteine 1470. The isoglutamyl cysteine thioester (Cys-Gln) cross-link spans 975–978; the sequence is CGEQ. The N-linked (GlcNAc...) asparagine glycan is linked to asparagine 994. N-linked (GlcNAc...) asparagine glycosylation is found at asparagine 1143, asparagine 1314, and asparagine 1427.

This sequence belongs to the protease inhibitor I39 (alpha-2-macroglobulin) family. Monomer.

It localises to the secreted. In terms of biological role, protease inhibitor with a wide spectrum of protein targets, which attaches through its thioester function. This chain is Alpha-1-inhibitor 3 (A1i3), found in Rattus norvegicus (Rat).